A 466-amino-acid polypeptide reads, in one-letter code: Methylenetetrahydrofolate--tRNA-(uracil-5-)-methyltransferase TrmFO (466 aa).

An FAD-binding site is contributed by 10 to 15; sequence GGGLAG.

Belongs to the MnmG family. TrmFO subfamily. The cofactor is FAD.

Its subcellular location is the cytoplasm. It catalyses the reaction uridine(54) in tRNA + (6R)-5,10-methylene-5,6,7,8-tetrahydrofolate + NADH + H(+) = 5-methyluridine(54) in tRNA + (6S)-5,6,7,8-tetrahydrofolate + NAD(+). It carries out the reaction uridine(54) in tRNA + (6R)-5,10-methylene-5,6,7,8-tetrahydrofolate + NADPH + H(+) = 5-methyluridine(54) in tRNA + (6S)-5,6,7,8-tetrahydrofolate + NADP(+). Functionally, catalyzes the folate-dependent formation of 5-methyl-uridine at position 54 (M-5-U54) in all tRNAs. The chain is Methylenetetrahydrofolate--tRNA-(uracil-5-)-methyltransferase TrmFO from Phenylobacterium zucineum (strain HLK1).